The sequence spans 60 residues: Cytotoxin sagitoxin (60 aa).

4 cysteine pairs are disulfide-bonded: Cys3/Cys21, Cys14/Cys38, Cys42/Cys53, and Cys54/Cys59.

Belongs to the three-finger toxin family. Short-chain subfamily. Type IA cytotoxin sub-subfamily. In terms of assembly, monomer in solution; Homodimer and oligomer (homohexamer) in the presence of negatively charged lipids forming a pore with a size ranging between 20 and 30 Angstroms. As to expression, expressed by the venom gland.

Its subcellular location is the secreted. It localises to the target cell membrane. Its function is as follows. Shows cytolytic activity on many different cells by forming pore in lipid membranes. In vivo, increases heart rate or kill the animal by cardiac arrest. In addition, it binds to heparin with high affinity, interacts with Kv channel-interacting protein 1 (KCNIP1) in a calcium-independent manner, and binds to integrin alpha-V/beta-3 (ITGAV/ITGB3) with moderate affinity. This Naja sagittifera (Andaman cobra) protein is Cytotoxin sagitoxin.